The chain runs to 334 residues: MAQYKGTMREAGRAMHLIKKREKQKEQMEVLKQRIAEETIMKSKVDKKFSAHYDAVEAELKSSTVGLVTLNDMKAKQEALLREREMQLAKREQLEQRRIQLEMLREKERRRERKRKISNLSFTLDEEEGDQEDSRQAESAEAHSAGAKKNLGKNPDVDTSFLPDREREEEENRLREELRQEWEAKREKVKGEEVEITFSYWDGSGHRRTVRMSKGSTVQQFLKRALQGLRRDFRELRAAGVEQLMYVKEDLILPHYHTFYDFIVAKARGKSGPLFSFDVHDDVRLLSDATMEKDESHAGKVVLRSWYEKNKHIFPASRWEPYDPEKKWDRYTIR.

Ala2 is subject to N-acetylalanine. Residues 122 to 175 form a disordered region; it reads FTLDEEEGDQEDSRQAESAEAHSAGAKKNLGKNPDVDTSFLPDREREEEENRLR. Basic and acidic residues-rich tracts occupy residues 132–141 and 163–175; these read EDSRQAESAE and PDRE…NRLR.

The protein belongs to the FAM50 family. In terms of tissue distribution, widely expressed. Abundant in testis, where it is expressed in seminiferous tubules, not in the interstitium. At the cellular level, expressed in primary spermatocytes and round spermatids, but not detectable in spermatogonia, elongating spermatids, mature spermatozoa, Sertoli cells or Leydig cells.

The sequence is that of Protein FAM50B (Fam50b) from Mus musculus (Mouse).